Reading from the N-terminus, the 450-residue chain is UDP-N-acetylmuramoylalanine--D-glutamate ligase (450 aa).

119–125 (GSNGKTT) is an ATP binding site.

This sequence belongs to the MurCDEF family.

It localises to the cytoplasm. The catalysed reaction is UDP-N-acetyl-alpha-D-muramoyl-L-alanine + D-glutamate + ATP = UDP-N-acetyl-alpha-D-muramoyl-L-alanyl-D-glutamate + ADP + phosphate + H(+). It functions in the pathway cell wall biogenesis; peptidoglycan biosynthesis. Functionally, cell wall formation. Catalyzes the addition of glutamate to the nucleotide precursor UDP-N-acetylmuramoyl-L-alanine (UMA). This Streptococcus pneumoniae (strain ATCC BAA-255 / R6) protein is UDP-N-acetylmuramoylalanine--D-glutamate ligase.